The following is a 433-amino-acid chain: uncharacterized protein (433 aa).

The protein belongs to the mimivirus R160 family.

It is found in the virion. This is an uncharacterized protein from Acanthamoeba polyphaga mimivirus (APMV).